The sequence spans 319 residues: Ribosomal protein L11 methyltransferase (319 aa).

The S-adenosyl-L-methionine site is built by threonine 165, glycine 186, aspartate 208, and asparagine 251.

This sequence belongs to the methyltransferase superfamily. PrmA family.

It localises to the cytoplasm. It catalyses the reaction L-lysyl-[protein] + 3 S-adenosyl-L-methionine = N(6),N(6),N(6)-trimethyl-L-lysyl-[protein] + 3 S-adenosyl-L-homocysteine + 3 H(+). Functionally, methylates ribosomal protein L11. The sequence is that of Ribosomal protein L11 methyltransferase from Limosilactobacillus reuteri subsp. reuteri (strain JCM 1112) (Lactobacillus reuteri).